The primary structure comprises 24 residues: Waglerin-3 (24 aa).

A compositionally biased stretch (basic and acidic residues) spans serine 1–proline 10. Residues serine 1–arginine 24 form a disordered region. Cysteine 11 and cysteine 15 are disulfide-bonded.

This sequence belongs to the waglerin family. Waglerin-1 is monomeric. In terms of processing, amidation of the waglerin-1 C-terminus increases the affinity by 2-fold. Expressed by the venom gland.

The protein resides in the secreted. Waglerin-1 selectively blocks the epsilon subunit of muscle nicotinic acetylcholine receptor (nAChR). Also has effects on rodent ionotropic GABA(A) receptors (GABR), since it potentiates I(GABA) in some neurons and depresses I(GABA) in others. In mice, it elicits tachypnea, ocular proptosis, rapid collapse and spasms, whereas no toxic effects on respiration and blood pressure are observed in rats. Functionally, waglerin-3 selectively blocks the epsilon subunit of muscle nicotinic acetylcholine receptor (nAChR). It elicits tachypnea, ocular proptosis, rapid collapse and spasms in mice. It causes death by respiratory failure. The polypeptide is Waglerin-3 (Tropidolaemus wagleri (Wagler's pit viper)).